The following is a 116-amino-acid chain: Large ribosomal subunit protein bL19 (116 aa).

Belongs to the bacterial ribosomal protein bL19 family.

This protein is located at the 30S-50S ribosomal subunit interface and may play a role in the structure and function of the aminoacyl-tRNA binding site. This chain is Large ribosomal subunit protein bL19, found in Streptomyces avermitilis (strain ATCC 31267 / DSM 46492 / JCM 5070 / NBRC 14893 / NCIMB 12804 / NRRL 8165 / MA-4680).